Consider the following 1040-residue polypeptide: Multidrug resistance protein MdtB (1040 aa).

Helical transmembrane passes span 25-45, 347-367, 369-389, 396-416, 440-460, 472-492, 537-557, 863-883, 888-908, 910-930, 968-988, and 998-1018; these read LLMA…PVAA, LMLA…NIPA, IIPG…MVFL, LTLM…IVVI, IGFT…PLLF, FAVT…TLTP, WLTL…WIVI, LGST…VLGV, FIHP…ALLA, IIAG…LIGI, ILMT…STGV, and IAMV…TPVI.

It belongs to the resistance-nodulation-cell division (RND) (TC 2.A.6) family. MdtB subfamily. In terms of assembly, part of a tripartite efflux system composed of MdtA, MdtB and MdtC. MdtB forms a heteromultimer with MdtC.

It is found in the cell inner membrane. The sequence is that of Multidrug resistance protein MdtB from Salmonella choleraesuis (strain SC-B67).